The following is a 545-amino-acid chain: Thermosome subunit alpha (545 aa).

The protein belongs to the TCP-1 chaperonin family. In terms of assembly, forms a Heterooligomeric complex of two stacked eight-membered rings.

In terms of biological role, molecular chaperone; binds unfolded polypeptides in vitro, and has a weak ATPase activity. The sequence is that of Thermosome subunit alpha (thsA) from Archaeoglobus fulgidus (strain ATCC 49558 / DSM 4304 / JCM 9628 / NBRC 100126 / VC-16).